We begin with the raw amino-acid sequence, 372 residues long: Queuine tRNA-ribosyltransferase (372 aa).

The active-site Proton acceptor is D89. Substrate contacts are provided by residues 89–93, D143, Q185, and G212; that span reads DSGGF. Residues 243-249 are RNA binding; that stretch reads GVGKPED. The Nucleophile role is filled by D262. Residues 267–271 form an RNA binding; important for wobble base 34 recognition region; that stretch reads TRNAR. Zn(2+) contacts are provided by C300, C302, C305, and H331.

Belongs to the queuine tRNA-ribosyltransferase family. Homodimer. Within each dimer, one monomer is responsible for RNA recognition and catalysis, while the other monomer binds to the replacement base PreQ1. It depends on Zn(2+) as a cofactor.

It catalyses the reaction 7-aminomethyl-7-carbaguanine + guanosine(34) in tRNA = 7-aminomethyl-7-carbaguanosine(34) in tRNA + guanine. Its pathway is tRNA modification; tRNA-queuosine biosynthesis. Its function is as follows. Catalyzes the base-exchange of a guanine (G) residue with the queuine precursor 7-aminomethyl-7-deazaguanine (PreQ1) at position 34 (anticodon wobble position) in tRNAs with GU(N) anticodons (tRNA-Asp, -Asn, -His and -Tyr). Catalysis occurs through a double-displacement mechanism. The nucleophile active site attacks the C1' of nucleotide 34 to detach the guanine base from the RNA, forming a covalent enzyme-RNA intermediate. The proton acceptor active site deprotonates the incoming PreQ1, allowing a nucleophilic attack on the C1' of the ribose to form the product. After dissociation, two additional enzymatic reactions on the tRNA convert PreQ1 to queuine (Q), resulting in the hypermodified nucleoside queuosine (7-(((4,5-cis-dihydroxy-2-cyclopenten-1-yl)amino)methyl)-7-deazaguanosine). The polypeptide is Queuine tRNA-ribosyltransferase (Chromohalobacter salexigens (strain ATCC BAA-138 / DSM 3043 / CIP 106854 / NCIMB 13768 / 1H11)).